A 126-amino-acid polypeptide reads, in one-letter code: Lymphocyte antigen 6E (126 aa).

A signal peptide spans 1–20 (MKAFLFAVLAAVLCVERAHT). In terms of domain architecture, UPAR/Ly6 spans 21–98 (LICFSCSDAS…CCDSFLCNIS (78 aa)). Cystine bridges form between cysteine 23-cysteine 48, cysteine 26-cysteine 35, cysteine 41-cysteine 69, cysteine 73-cysteine 89, and cysteine 90-cysteine 95. An N-linked (GlcNAc...) asparagine glycan is attached at asparagine 96. Serine 98 is lipidated: GPI-anchor amidated serine. A propeptide spans 99-126 (GSSSVKASYAVLALGILVSFVYVLRARE) (removed in mature form).

Expressed by thymic blast cells.

The protein localises to the cell membrane. The polypeptide is Lymphocyte antigen 6E (LY6E) (Gallus gallus (Chicken)).